We begin with the raw amino-acid sequence, 126 residues long: Histone H2B type 1-O (126 aa).

A compositionally biased stretch (low complexity) spans 1 to 12; it reads MPDPAKSAPAPK. A disordered region spans residues 1–35; sequence MPDPAKSAPAPKKGSKKAVTKAQKKDGKKRKRSRK. Pro-2 carries the N-acetylproline; partial modification. At Lys-6 the chain carries N6-(2-hydroxyisobutyryl)lysine; alternate. Lys-6 carries the post-translational modification N6-(beta-hydroxybutyryl)lysine; alternate. Lys-6 is modified (N6-acetyllysine; alternate). At Lys-6 the chain carries N6-butyryllysine; alternate. Lys-6 carries the N6-crotonyllysine; alternate modification. Position 6 is an N6-lactoyllysine; alternate (Lys-6). A Glycyl lysine isopeptide (Lys-Gly) (interchain with G-Cter in SUMO2); alternate cross-link involves residue Lys-6. At Ser-7 the chain carries ADP-ribosylserine. Lys-12 is modified (N6-(beta-hydroxybutyryl)lysine; alternate). 2 positions are modified to N6-acetyllysine; alternate: Lys-12 and Lys-13. An N6-crotonyllysine; alternate mark is found at Lys-12 and Lys-13. An N6-lactoyllysine; alternate modification is found at Lys-12. Position 13 is an N6-(2-hydroxyisobutyryl)lysine; alternate (Lys-13). Phosphoserine; by STK4/MST1 is present on Ser-15. 4 positions are modified to N6-acetyllysine; alternate: Lys-16, Lys-17, Lys-21, and Lys-24. Lys-16, Lys-17, Lys-21, and Lys-24 each carry N6-crotonyllysine; alternate. N6-lactoyllysine; alternate occurs at positions 16, 17, 21, and 24. N6-(beta-hydroxybutyryl)lysine; alternate occurs at positions 17 and 21. Lys-17 carries the post-translational modification N6-glutaryllysine; alternate. 2 positions are modified to N6-(2-hydroxyisobutyryl)lysine; alternate: Lys-21 and Lys-24. An N6-butyryllysine; alternate modification is found at Lys-21. A Glycyl lysine isopeptide (Lys-Gly) (interchain with G-Cter in SUMO2); alternate cross-link involves residue Lys-21. Residue Lys-25 is modified to N6-(2-hydroxyisobutyryl)lysine. Position 35 is an N6-(2-hydroxyisobutyryl)lysine; alternate (Lys-35). At Lys-35 the chain carries N6-(beta-hydroxybutyryl)lysine; alternate. Lys-35 is modified (N6-crotonyllysine; alternate). N6-glutaryllysine; alternate is present on Lys-35. Position 35 is an N6-succinyllysine; alternate (Lys-35). Lys-35 is covalently cross-linked (Glycyl lysine isopeptide (Lys-Gly) (interchain with G-Cter in ubiquitin); alternate). Glu-36 carries the post-translational modification PolyADP-ribosyl glutamic acid. Ser-37 is modified (phosphoserine; by AMPK). An N6-(2-hydroxyisobutyryl)lysine; alternate mark is found at Lys-44, Lys-47, and Lys-58. N6-lactoyllysine; alternate is present on Lys-44. An N6-glutaryllysine; alternate mark is found at Lys-44 and Lys-47. At Lys-47 the chain carries N6-methyllysine; alternate. Lys-58 is subject to N6,N6-dimethyllysine; alternate. At Arg-80 the chain carries Dimethylated arginine. Position 86 is an N6-(2-hydroxyisobutyryl)lysine; alternate (Lys-86). Lys-86 is subject to N6-(beta-hydroxybutyryl)lysine; alternate. Lys-86 carries the post-translational modification N6-acetyllysine; alternate. Lys-86 bears the N6-lactoyllysine; alternate mark. Residue Lys-86 is modified to N6,N6,N6-trimethyllysine; alternate. Residues Arg-87 and Arg-93 each carry the omega-N-methylarginine modification. N6-(2-hydroxyisobutyryl)lysine; alternate is present on Lys-109. Lys-109 is subject to N6-lactoyllysine; alternate. Lys-109 carries the post-translational modification N6-glutaryllysine; alternate. Lys-109 is modified (N6-methyllysine; alternate). O-linked (GlcNAc) serine glycosylation is present at Ser-113. Residue Thr-116 is modified to Phosphothreonine. Lys-117 and Lys-121 each carry N6-(2-hydroxyisobutyryl)lysine; alternate. An N6-(beta-hydroxybutyryl)lysine; alternate mark is found at Lys-117 and Lys-121. Residues Lys-117 and Lys-121 each carry the N6-lactoyllysine; alternate modification. Residues Lys-117 and Lys-121 each carry the N6-glutaryllysine; alternate modification. Lys-117 and Lys-121 each carry N6-succinyllysine; alternate. Position 117 is an N6-malonyllysine; alternate (Lys-117). Lys-117 bears the N6-methylated lysine; alternate mark. Residue Lys-121 forms a Glycyl lysine isopeptide (Lys-Gly) (interchain with G-Cter in ubiquitin); alternate linkage.

The protein belongs to the histone H2B family. As to quaternary structure, the nucleosome is a histone octamer containing two molecules each of H2A, H2B, H3 and H4 assembled in one H3-H4 heterotetramer and two H2A-H2B heterodimers. The octamer wraps approximately 147 bp of DNA. Post-translationally, monoubiquitination at Lys-35 (H2BK34Ub) by the MSL1/MSL2 dimer is required for histone H3 'Lys-4' (H3K4me) and 'Lys-79' (H3K79me) methylation and transcription activation at specific gene loci, such as HOXA9 and MEIS1 loci. Similarly, monoubiquitination at Lys-121 (H2BK120Ub) by the RNF20/40 complex gives a specific tag for epigenetic transcriptional activation and is also prerequisite for histone H3 'Lys-4' and 'Lys-79' methylation. It also functions cooperatively with the FACT dimer to stimulate elongation by RNA polymerase II. H2BK120Ub also acts as a regulator of mRNA splicing: deubiquitination by USP49 is required for efficient cotranscriptional splicing of a large set of exons. Phosphorylation at Ser-37 (H2BS36ph) by AMPK in response to stress promotes transcription. Phosphorylated on Ser-15 (H2BS14ph) by STK4/MST1 during apoptosis; which facilitates apoptotic chromatin condensation. Also phosphorylated on Ser-15 in response to DNA double strand breaks (DSBs), and in correlation with somatic hypermutation and immunoglobulin class-switch recombination. In terms of processing, glcNAcylation at Ser-113 promotes monoubiquitination of Lys-121. It fluctuates in response to extracellular glucose, and associates with transcribed genes. Post-translationally, ADP-ribosylated by PARP1 or PARP2 on Ser-7 (H2BS6ADPr) in response to DNA damage. H2BS6ADPr promotes recruitment of CHD1L. Poly ADP-ribosylation on Glu-36 (H2BE35ADPr) by PARP1 regulates adipogenesis: it inhibits phosphorylation at Ser-37 (H2BS36ph), thereby blocking expression of pro-adipogenetic genes. Crotonylation (Kcr) is specifically present in male germ cells and marks testis-specific genes in post-meiotic cells, including X-linked genes that escape sex chromosome inactivation in haploid cells. Crotonylation marks active promoters and enhancers and confers resistance to transcriptional repressors. It is also associated with post-meiotically activated genes on autosomes. In terms of processing, lactylated in macrophages by EP300/P300 by using lactoyl-CoA directly derived from endogenous or exogenous lactate, leading to stimulates gene transcription.

Its subcellular location is the nucleus. The protein resides in the chromosome. In terms of biological role, core component of nucleosome. Nucleosomes wrap and compact DNA into chromatin, limiting DNA accessibility to the cellular machineries which require DNA as a template. Histones thereby play a central role in transcription regulation, DNA repair, DNA replication and chromosomal stability. DNA accessibility is regulated via a complex set of post-translational modifications of histones, also called histone code, and nucleosome remodeling. This Homo sapiens (Human) protein is Histone H2B type 1-O.